Consider the following 304-residue polypeptide: 4-diphosphocytidyl-2-C-methyl-D-erythritol kinase (304 aa).

Residue Lys23 is part of the active site. 111–121 (PIGGGLGGGSS) contributes to the ATP binding site. The active site involves Asp153.

The protein belongs to the GHMP kinase family. IspE subfamily. In terms of assembly, homodimer.

The catalysed reaction is 4-CDP-2-C-methyl-D-erythritol + ATP = 4-CDP-2-C-methyl-D-erythritol 2-phosphate + ADP + H(+). It participates in isoprenoid biosynthesis; isopentenyl diphosphate biosynthesis via DXP pathway; isopentenyl diphosphate from 1-deoxy-D-xylulose 5-phosphate: step 3/6. Functionally, catalyzes the phosphorylation of the position 2 hydroxy group of 4-diphosphocytidyl-2C-methyl-D-erythritol. This chain is 4-diphosphocytidyl-2-C-methyl-D-erythritol kinase, found in Wigglesworthia glossinidia brevipalpis.